The primary structure comprises 550 residues: Dihydroxy-acid dehydratase (550 aa).

A Mg(2+)-binding site is contributed by Asp78. Cys119 is a binding site for [2Fe-2S] cluster. Residues Asp120 and Lys121 each coordinate Mg(2+). Lys121 is subject to N6-carboxylysine. Residue Cys192 participates in [2Fe-2S] cluster binding. Glu440 lines the Mg(2+) pocket. Catalysis depends on Ser466, which acts as the Proton acceptor.

It belongs to the IlvD/Edd family. As to quaternary structure, homodimer. Requires [2Fe-2S] cluster as cofactor. Mg(2+) is required as a cofactor.

The catalysed reaction is (2R)-2,3-dihydroxy-3-methylbutanoate = 3-methyl-2-oxobutanoate + H2O. It carries out the reaction (2R,3R)-2,3-dihydroxy-3-methylpentanoate = (S)-3-methyl-2-oxopentanoate + H2O. It functions in the pathway amino-acid biosynthesis; L-isoleucine biosynthesis; L-isoleucine from 2-oxobutanoate: step 3/4. It participates in amino-acid biosynthesis; L-valine biosynthesis; L-valine from pyruvate: step 3/4. Functions in the biosynthesis of branched-chain amino acids. Catalyzes the dehydration of (2R,3R)-2,3-dihydroxy-3-methylpentanoate (2,3-dihydroxy-3-methylvalerate) into 2-oxo-3-methylpentanoate (2-oxo-3-methylvalerate) and of (2R)-2,3-dihydroxy-3-methylbutanoate (2,3-dihydroxyisovalerate) into 2-oxo-3-methylbutanoate (2-oxoisovalerate), the penultimate precursor to L-isoleucine and L-valine, respectively. The chain is Dihydroxy-acid dehydratase from Thermodesulfovibrio yellowstonii (strain ATCC 51303 / DSM 11347 / YP87).